A 98-amino-acid polypeptide reads, in one-letter code: Large ribosomal subunit protein eL14 (98 aa).

This sequence belongs to the eukaryotic ribosomal protein eL14 family.

The protein is Large ribosomal subunit protein eL14 of Hyperthermus butylicus (strain DSM 5456 / JCM 9403 / PLM1-5).